The chain runs to 105 residues: Large ribosomal subunit protein uL24 (105 aa).

It belongs to the universal ribosomal protein uL24 family. In terms of assembly, part of the 50S ribosomal subunit.

One of two assembly initiator proteins, it binds directly to the 5'-end of the 23S rRNA, where it nucleates assembly of the 50S subunit. In terms of biological role, one of the proteins that surrounds the polypeptide exit tunnel on the outside of the subunit. The polypeptide is Large ribosomal subunit protein uL24 (Mycolicibacterium vanbaalenii (strain DSM 7251 / JCM 13017 / BCRC 16820 / KCTC 9966 / NRRL B-24157 / PYR-1) (Mycobacterium vanbaalenii)).